Consider the following 389-residue polypeptide: Glutamate 5-kinase (389 aa).

Residue lysine 17 participates in ATP binding. Serine 57, aspartate 144, and asparagine 156 together coordinate substrate. 176-177 (SD) contacts ATP. The PUA domain occupies 282 to 359 (AGEIHVDAGA…NEIETILGYV (78 aa)).

Belongs to the glutamate 5-kinase family.

It is found in the cytoplasm. The catalysed reaction is L-glutamate + ATP = L-glutamyl 5-phosphate + ADP. The protein operates within amino-acid biosynthesis; L-proline biosynthesis; L-glutamate 5-semialdehyde from L-glutamate: step 1/2. Its function is as follows. Catalyzes the transfer of a phosphate group to glutamate to form L-glutamate 5-phosphate. The sequence is that of Glutamate 5-kinase from Agrobacterium fabrum (strain C58 / ATCC 33970) (Agrobacterium tumefaciens (strain C58)).